The primary structure comprises 285 residues: ATP phosphoribosyltransferase (285 aa).

The protein belongs to the ATP phosphoribosyltransferase family. Long subfamily. It depends on Mg(2+) as a cofactor.

It localises to the cytoplasm. It catalyses the reaction 1-(5-phospho-beta-D-ribosyl)-ATP + diphosphate = 5-phospho-alpha-D-ribose 1-diphosphate + ATP. It participates in amino-acid biosynthesis; L-histidine biosynthesis; L-histidine from 5-phospho-alpha-D-ribose 1-diphosphate: step 1/9. Its activity is regulated as follows. Feedback inhibited by histidine. Catalyzes the condensation of ATP and 5-phosphoribose 1-diphosphate to form N'-(5'-phosphoribosyl)-ATP (PR-ATP). Has a crucial role in the pathway because the rate of histidine biosynthesis seems to be controlled primarily by regulation of HisG enzymatic activity. This chain is ATP phosphoribosyltransferase, found in Streptomyces avermitilis (strain ATCC 31267 / DSM 46492 / JCM 5070 / NBRC 14893 / NCIMB 12804 / NRRL 8165 / MA-4680).